We begin with the raw amino-acid sequence, 464 residues long: 3-isopropylmalate dehydratase large subunit (464 aa).

The [4Fe-4S] cluster site is built by Cys-345, Cys-405, and Cys-408.

This sequence belongs to the aconitase/IPM isomerase family. LeuC type 1 subfamily. Heterodimer of LeuC and LeuD. [4Fe-4S] cluster is required as a cofactor.

It catalyses the reaction (2R,3S)-3-isopropylmalate = (2S)-2-isopropylmalate. It functions in the pathway amino-acid biosynthesis; L-leucine biosynthesis; L-leucine from 3-methyl-2-oxobutanoate: step 2/4. Its function is as follows. Catalyzes the isomerization between 2-isopropylmalate and 3-isopropylmalate, via the formation of 2-isopropylmaleate. This Flavobacterium johnsoniae (strain ATCC 17061 / DSM 2064 / JCM 8514 / BCRC 14874 / CCUG 350202 / NBRC 14942 / NCIMB 11054 / UW101) (Cytophaga johnsonae) protein is 3-isopropylmalate dehydratase large subunit.